The following is a 185-amino-acid chain: Crossover junction endodeoxyribonuclease RuvC (185 aa).

Catalysis depends on residues Asp-7, Glu-66, and Asp-137. Mg(2+) is bound by residues Asp-7, Glu-66, and Asp-137.

Belongs to the RuvC family. As to quaternary structure, homodimer which binds Holliday junction (HJ) DNA. The HJ becomes 2-fold symmetrical on binding to RuvC with unstacked arms; it has a different conformation from HJ DNA in complex with RuvA. In the full resolvosome a probable DNA-RuvA(4)-RuvB(12)-RuvC(2) complex forms which resolves the HJ. Mg(2+) serves as cofactor.

The protein localises to the cytoplasm. The enzyme catalyses Endonucleolytic cleavage at a junction such as a reciprocal single-stranded crossover between two homologous DNA duplexes (Holliday junction).. Functionally, the RuvA-RuvB-RuvC complex processes Holliday junction (HJ) DNA during genetic recombination and DNA repair. Endonuclease that resolves HJ intermediates. Cleaves cruciform DNA by making single-stranded nicks across the HJ at symmetrical positions within the homologous arms, yielding a 5'-phosphate and a 3'-hydroxyl group; requires a central core of homology in the junction. The consensus cleavage sequence is 5'-(A/T)TT(C/G)-3'. Cleavage occurs on the 3'-side of the TT dinucleotide at the point of strand exchange. HJ branch migration catalyzed by RuvA-RuvB allows RuvC to scan DNA until it finds its consensus sequence, where it cleaves and resolves the cruciform DNA. This chain is Crossover junction endodeoxyribonuclease RuvC, found in Anaeromyxobacter dehalogenans (strain 2CP-1 / ATCC BAA-258).